The primary structure comprises 344 residues: 17-beta-hydroxysteroid dehydrogenase type 1 (344 aa).

Residue 3 to 32 coordinates NAD(+); sequence PTVVLITGCSSGIGMHLAVRLASDRSQSFK. NADP(+)-binding positions include 10-38 and Asp66; that span reads GCSS…ATLR. Ser135 is subject to Phosphoserine. Ser143 provides a ligand contact to substrate. The active-site Proton acceptor is Tyr156. Residue Lys160 coordinates NADP(+).

The protein belongs to the short-chain dehydrogenases/reductases (SDR) family. Homodimer. Exists predominantly as a homodimer but also exits as monomer.

It is found in the cytoplasm. It carries out the reaction 17beta-estradiol + NAD(+) = estrone + NADH + H(+). The catalysed reaction is 17beta-estradiol + NADP(+) = estrone + NADPH + H(+). The enzyme catalyses testosterone + NADP(+) = androst-4-ene-3,17-dione + NADPH + H(+). It participates in steroid biosynthesis; estrogen biosynthesis. In terms of biological role, favors the reduction of estrogens and androgens. Converts estrone (E1) to a more potent estrogen, 17beta-estradiol (E2). Also has 20-alpha-HSD activity. Uses preferentially NADH. The polypeptide is 17-beta-hydroxysteroid dehydrogenase type 1 (Mus musculus (Mouse)).